A 238-amino-acid polypeptide reads, in one-letter code: 3-deoxy-manno-octulosonate cytidylyltransferase (238 aa).

It belongs to the KdsB family.

It is found in the cytoplasm. It catalyses the reaction 3-deoxy-alpha-D-manno-oct-2-ulosonate + CTP = CMP-3-deoxy-beta-D-manno-octulosonate + diphosphate. Its pathway is nucleotide-sugar biosynthesis; CMP-3-deoxy-D-manno-octulosonate biosynthesis; CMP-3-deoxy-D-manno-octulosonate from 3-deoxy-D-manno-octulosonate and CTP: step 1/1. It participates in bacterial outer membrane biogenesis; lipopolysaccharide biosynthesis. Its function is as follows. Activates KDO (a required 8-carbon sugar) for incorporation into bacterial lipopolysaccharide in Gram-negative bacteria. In Nitratiruptor sp. (strain SB155-2), this protein is 3-deoxy-manno-octulosonate cytidylyltransferase.